Reading from the N-terminus, the 201-residue chain is uncharacterized protein (201 aa).

The chain crosses the membrane as a helical span at residues 11–31 (IIILTIMILTIIIFTRTINGL).

The protein resides in the membrane. This is an uncharacterized protein from Acanthamoeba polyphaga mimivirus (APMV).